Consider the following 366-residue polypeptide: MQLSSVLLTAAGLLAPVYSSAIISIGRRSEGLDVSLASTGNTKVQVSVTNTGSSEISILRANTLFDASPTKKFTVYKEGSRKEVPFKGVHLRRSPSDLAKDNLQPIGPGQTIDKEFDLAETLNLSESGTYIVSADGVFPIIDPKSFSIASVIPYESNELKIEVDGKQVSGVLSTRAKIHDHLAQRADFNNGNCTDHQKAVIASALKRDSSIAGEASNAALSGDVRVFEQYFRTTDPSIRQQVSDRFHAISNEACSAEGGVVKYQCEDEMDVCRPGTVAYALLGSNVVVNCPIYYSVTAVSQACDAGDQALTVIHELSHIDAVYYPATTDLAYGEDASMALNADMSIRNADSYTFYANAVRQNCNPS.

A signal peptide spans 1-19 (MQLSSVLLTAAGLLAPVYS). Positions 23–184 (ISIGRRSEGL…RAKIHDHLAQ (162 aa)) are excised as a propeptide. N123 and N192 each carry an N-linked (GlcNAc...) asparagine glycan. Cysteines 272 and 290 form a disulfide. H314 lines the Zn(2+) pocket. E315 is a catalytic residue. Residue H318 participates in Zn(2+) binding.

Belongs to the peptidase M35 family. Requires Zn(2+) as cofactor.

It is found in the secreted. The catalysed reaction is Preferential cleavage of bonds with hydrophobic residues in P1'. Also 3-Asn-|-Gln-4 and 8-Gly-|-Ser-9 bonds in insulin B chain.. In terms of biological role, secreted metalloproteinase that allows assimilation of proteinaceous substrates. Shows high activities on basic nuclear substrates such as histone and protamine. This chain is Neutral protease 2 homolog BDBG_02110, found in Blastomyces gilchristii (strain SLH14081) (Blastomyces dermatitidis).